A 431-amino-acid chain; its full sequence is Histidine--tRNA ligase (431 aa).

A disordered region spans residues 1 to 20; it reads MALQRPKGTQDHLPDGSPKL.

The protein belongs to the class-II aminoacyl-tRNA synthetase family. In terms of assembly, homodimer.

It is found in the cytoplasm. It catalyses the reaction tRNA(His) + L-histidine + ATP = L-histidyl-tRNA(His) + AMP + diphosphate + H(+). The sequence is that of Histidine--tRNA ligase from Deinococcus geothermalis (strain DSM 11300 / CIP 105573 / AG-3a).